The chain runs to 615 residues: Probable transporter mch1 (615 aa).

Positions 1–35 (MTGSIGQAPAIDKRDFDINRRSSTPHETAAQEDEA) are disordered. The span at 11-20 (IDKRDFDINR) shows a compositional bias: basic and acidic residues. Residues 84-104 (FVWGVITCLGAGSITAFSLYG) traverse the membrane as a helical segment. N-linked (GlcNAc...) asparagine glycosylation is present at asparagine 112. Helical transmembrane passes span 120–140 (EVSI…GYLC), 147–167 (PLTL…AFVY), 182–202 (FWVM…MYLA), 218–238 (GIIL…QSQV), and 261–281 (FLFL…ALRI). Asparagine 329 carries N-linked (GlcNAc...) asparagine glycosylation. A run of 6 helical transmembrane segments spans residues 371-391 (IFLA…VTGP), 428-448 (IIAL…DLFA), 477-497 (LAFL…LASP), 512-532 (LVGL…SVVW), 538-558 (GTNW…WGVI), and 583-603 (FGFW…AWLV).

This sequence belongs to the major facilitator superfamily.

The protein localises to the vacuole membrane. Its function is as follows. Probable transporter. The protein is Probable transporter mch1 (mch1) of Emericella nidulans (strain FGSC A4 / ATCC 38163 / CBS 112.46 / NRRL 194 / M139) (Aspergillus nidulans).